A 538-amino-acid chain; its full sequence is Serine/threonine-protein phosphatase 5 (538 aa).

3 TPR repeats span residues 13–46, 48–80, and 81–114; these read AEEFKSQANEAFKGHKYSSAIDLYTKAIELNSNN, VYWANRAFAHTKLEEYGSAIQDASKAIEVDSRY, and SKGYYRRGAAYLAMGKFKDALKDFQQVKRLSPND. A run of 2 helical transmembrane segments spans residues 163–183 and 185–205; these read SSMPTKTALAAVVAAVMVVAV and GFATTEILMVLVSVVLGTFWW. Residues D282, H284, D311, and N343 each contribute to the Mn(2+) site. H344 acts as the Proton donor in catalysis. H392 and H467 together coordinate Mn(2+).

Belongs to the PPP phosphatase family. PP-5 (PP-T) subfamily. In terms of assembly, interacts with PHYA and PHYB, mostly when they are phosphorylated and in Pfr forms. Requires Mn(2+) as cofactor.

It localises to the endoplasmic reticulum membrane. Its subcellular location is the nucleus membrane. The protein resides in the cytoplasm. It is found in the nucleus. The protein localises to the nucleoplasm. It localises to the nucleus speckle. The catalysed reaction is O-phospho-L-seryl-[protein] + H2O = L-seryl-[protein] + phosphate. It carries out the reaction O-phospho-L-threonyl-[protein] + H2O = L-threonyl-[protein] + phosphate. With respect to regulation, activated by arachidonic acid (AA). In terms of biological role, isoform 2 dephosphorylates phosphorylated phytochromes, with a preference toward Pfr forms, and enhances phytochrome-mediated photoresponses, probably by enhancing their stability and their binding affinity for light signal transducers such as NDPK2. Can use para-nitrophenylphosphate (pNPP) as substrate. This chain is Serine/threonine-protein phosphatase 5 (PAPP5), found in Arabidopsis thaliana (Mouse-ear cress).